Reading from the N-terminus, the 443-residue chain is MSTTPATPKVGFVSLGCPKALVDSERILTQLRMEGYEVVPTYEDADVVVVNTCGFIDSAKAESLEVIGEAIKENGKVIVTGCMGVEEGSIRDVHPSVLSVTGPQQYEQVVNAVHEVVPPRQDHNPLIDLVPPQGVKLTPRHYAYLKISEGCNHSCSFCIIPSMRGKLVSRPVGEVLSEAERLVKAGVKEILVISQDTSAYGVDVKYKTDFWNGRPVKTRMLELCEALSSLGAWVRLHYVYPYPNVDDVIPLMAAGKILPYLDIPFQHASPKVLKSMKRPAFEDRTLARIKNWREQCPELVIRSTFIVGFPGETEEDFQYLLDWLTEAQLDRVGCFQYSPVEGAPANDLGLEEVPDDIKQERWDRFMAHQQAISTARLQLRIGKEIEVLIDEVEEQGSVGRSFFDAPEIDGNVFIDGDHGFKPGDKVRCRVVDADEYDMWAEPI.

In terms of domain architecture, MTTase N-terminal spans 8–118 (PKVGFVSLGC…VVNAVHEVVP (111 aa)). C17, C53, C82, C151, C155, and C158 together coordinate [4Fe-4S] cluster. Residues 137 to 375 (LTPRHYAYLK…MAHQQAISTA (239 aa)) form the Radical SAM core domain. The TRAM domain occupies 378-443 (QLRIGKEIEV…DEYDMWAEPI (66 aa)).

It belongs to the methylthiotransferase family. RimO subfamily. The cofactor is [4Fe-4S] cluster.

Its subcellular location is the cytoplasm. The catalysed reaction is L-aspartate(89)-[ribosomal protein uS12]-hydrogen + (sulfur carrier)-SH + AH2 + 2 S-adenosyl-L-methionine = 3-methylsulfanyl-L-aspartate(89)-[ribosomal protein uS12]-hydrogen + (sulfur carrier)-H + 5'-deoxyadenosine + L-methionine + A + S-adenosyl-L-homocysteine + 2 H(+). Functionally, catalyzes the methylthiolation of an aspartic acid residue of ribosomal protein uS12. In Pseudomonas putida (strain GB-1), this protein is Ribosomal protein uS12 methylthiotransferase RimO.